Reading from the N-terminus, the 213-residue chain is Large ribosomal subunit protein bL25 (213 aa).

The protein belongs to the bacterial ribosomal protein bL25 family. CTC subfamily. In terms of assembly, part of the 50S ribosomal subunit; part of the 5S rRNA/L5/L18/L25 subcomplex. Contacts the 5S rRNA. Binds to the 5S rRNA independently of L5 and L18.

Functionally, this is one of the proteins that binds to the 5S RNA in the ribosome where it forms part of the central protuberance. The chain is Large ribosomal subunit protein bL25 from Mesorhizobium japonicum (strain LMG 29417 / CECT 9101 / MAFF 303099) (Mesorhizobium loti (strain MAFF 303099)).